We begin with the raw amino-acid sequence, 547 residues long: Inositol-tetrakisphosphate 1-kinase 6 (547 aa).

Residue Lys263 coordinates 1D-myo-inositol 1,3,4-trisphosphate. Residues Arg317 and Lys370 each contribute to the ATP site. The region spanning 327 to 539 (LEGLSAEGRP…FWDAIKQSYE (213 aa)) is the ATP-grasp domain. 2 residues coordinate 1D-myo-inositol 1,3,4-trisphosphate: His381 and Lys415. ATP-binding positions include 404-415 (QEYIDHGSKIFK), Ser430, and Ser450. The Mg(2+) site is built by Asp497, Asp511, and Asn513. 1D-myo-inositol 1,3,4-trisphosphate is bound by residues Asn513 and Ser517.

The protein belongs to the ITPK1 family. As to quaternary structure, monomer. Requires Mg(2+) as cofactor.

The catalysed reaction is 1D-myo-inositol 3,4,5,6-tetrakisphosphate + ATP = 1D-myo-inositol 1,3,4,5,6-pentakisphosphate + ADP + H(+). The enzyme catalyses 1D-myo-inositol 1,3,4-trisphosphate + ATP = 1D-myo-inositol 1,3,4,5-tetrakisphosphate + ADP + H(+). It catalyses the reaction 1D-myo-inositol 1,3,4-trisphosphate + ATP = 1D-myo-inositol 1,3,4,6-tetrakisphosphate + ADP + H(+). Kinase that can phosphorylate various inositol polyphosphate such as Ins(3,4,5,6)P4 or Ins(1,3,4)P3 and participates in phytic acid biosynthesis in developing seeds. Phytic acid is the primary storage form of phosphorus in cereal grains and other plant seeds. The protein is Inositol-tetrakisphosphate 1-kinase 6 of Oryza sativa subsp. indica (Rice).